We begin with the raw amino-acid sequence, 569 residues long: Putative potassium-transporting ATPase ATP-binding subunit (569 aa).

The next 2 membrane-spanning stretches (helical) occupy residues 34–54 (PVMFVVWAGSVLATLLTLAMV) and 58–78 (IAGSALFTGVISLWLWFTVLF). The 4-aspartylphosphate intermediate role is filled by D194. ATP is bound by residues D231, E235, 264–271 (FTAQSRMS), and K282. Residues D405 and D409 each contribute to the Mg(2+) site. A run of 3 helical transmembrane segments spans residues 475–495 (FAIIPAAFAATYPQLNALNVM), 503–523 (AILSAVIFNALIIIFLIPLAL), and 543–563 (IYGLGGLVVPFIGIKVIDVLL).

This sequence belongs to the cation transport ATPase (P-type) (TC 3.A.3) family. Type IA subfamily. In terms of assembly, the system is composed of three essential subunits: KdpA, KdpB and KdpC.

The protein localises to the cell inner membrane. The catalysed reaction is K(+)(out) + ATP + H2O = K(+)(in) + ADP + phosphate + H(+). Part of the high-affinity ATP-driven potassium transport (or Kdp) system, which catalyzes the hydrolysis of ATP coupled with the electrogenic transport of potassium into the cytoplasm. This subunit is responsible for energy coupling to the transport system and for the release of the potassium ions to the cytoplasm. This chain is Putative potassium-transporting ATPase ATP-binding subunit, found in Salmonella typhi.